Here is a 475-residue protein sequence, read N- to C-terminus: MTNDTWNEVRQDLLKVVGKNNFSAWIEPIDFDRIDERTAHFHVPTNFIGSWVTNNFGDLILRQLSAHGAGADRVKFTVSPKAGAAVAAPANTSAPRPVPEMAAAAPAPAPVHHTAPAPAPVAAPAQPRELPGAKLNPNFTFANFVVGKPNELAHAAARRVAETLDVTFNPLFLYGGVGLGKTHLMHAIAWDLQDRHPDAKILFLSAEQFMHRFVRALREQDTFNFKETFRSVDILMVDDVQFIAGKTSTQQEFFHTFNALVEMGKQIVISGDRAPVDMEELDNRIASRLQCGLVVDIHPTDYELRLGVLQHKAELLGAKYPHITFATGVLEYLAQKISSNVRVLEGALTRLFAFADLVRREVTVDLAKECLTDVLRATDKKVTMDEILKKTCEYYKIRQVDMISQNRQRVIARPRQMAMYLCKRLTTRSLPEIGKKFGGRDHTTILYGVRKIEELMQADSQIAEDAELLRRTLEA.

The domain I, interacts with DnaA modulators stretch occupies residues 1–71 (MTNDTWNEVR…RQLSAHGAGA (71 aa)). The segment at 71-133 (ADRVKFTVSP…PAQPRELPGA (63 aa)) is domain II. Over residues 107–127 (APAPVHHTAPAPAPVAAPAQP) the composition is skewed to low complexity. A disordered region spans residues 107 to 129 (APAPVHHTAPAPAPVAAPAQPRE). A domain III, AAA+ region region spans residues 134–355 (KLNPNFTFAN…GALTRLFAFA (222 aa)). Residues glycine 178, glycine 180, lysine 181, and threonine 182 each contribute to the ATP site. The domain IV, binds dsDNA stretch occupies residues 356–475 (DLVRREVTVD…AELLRRTLEA (120 aa)).

This sequence belongs to the DnaA family. Oligomerizes as a right-handed, spiral filament on DNA at oriC.

It is found in the cytoplasm. Functionally, plays an essential role in the initiation and regulation of chromosomal replication. ATP-DnaA binds to the origin of replication (oriC) to initiate formation of the DNA replication initiation complex once per cell cycle. Binds the DnaA box (a 9 base pair repeat at the origin) and separates the double-stranded (ds)DNA. Forms a right-handed helical filament on oriC DNA; dsDNA binds to the exterior of the filament while single-stranded (ss)DNA is stabiized in the filament's interior. The ATP-DnaA-oriC complex binds and stabilizes one strand of the AT-rich DNA unwinding element (DUE), permitting loading of DNA polymerase. After initiation quickly degrades to an ADP-DnaA complex that is not apt for DNA replication. Binds acidic phospholipids. The protein is Chromosomal replication initiator protein DnaA of Jannaschia sp. (strain CCS1).